Here is a 357-residue protein sequence, read N- to C-terminus: Sorbitol dehydrogenase (357 aa).

The residue at position 2 (Ala2) is an N-acetylalanine. A Zn(2+)-binding site is contributed by Cys45. Tyr51 contacts substrate. Zn(2+) contacts are provided by His70 and Glu71. Glu156 provides a ligand contact to substrate. Phosphoserine is present on Ser169. NAD(+)-binding positions include Val184, Asp204, Arg209, Val273 to Met275, and Val297 to Arg299. 2 residues coordinate substrate: Arg299 and Tyr300.

It belongs to the zinc-containing alcohol dehydrogenase family. Homotetramer. The cofactor is Zn(2+). In terms of tissue distribution, testis has the highest level of expression, followed by kidney, liver, and lung. Low levels of expression are also observed in lens, brain, and skeletal muscle. Expressed in sperm flagellum and very low expression in the sperm head.

It localises to the mitochondrion membrane. The protein localises to the cell projection. Its subcellular location is the cilium. It is found in the flagellum. The enzyme catalyses keto-D-fructose + NADH + H(+) = D-sorbitol + NAD(+). It catalyses the reaction xylitol + NAD(+) = D-xylulose + NADH + H(+). The catalysed reaction is L-iditol + NAD(+) = keto-L-sorbose + NADH + H(+). With respect to regulation, inhibited in vitro by p-hydroxymercuribenzoate, EDTA, l,l0-phenanthroline and N-ethylmaleimide. Polyol dehydrogenase that catalyzes the reversible NAD(+)-dependent oxidation of various sugar alcohols. Is active with D-sorbitol (D-glucitol) leading to the C2-oxidized product D-fructose. Is a key enzyme in the polyol pathway that interconverts glucose and fructose via sorbitol, which constitutes an important alternate route for glucose metabolism. May play a role in sperm motility by using sorbitol as an alternative energy source for sperm motility and protein tyrosine phosphorylation. Has no activity on ethanol. Cannot use NADP(+) as the electron acceptor. The sequence is that of Sorbitol dehydrogenase (Sord) from Mus musculus (Mouse).